The sequence spans 118 residues: DNA-binding protein SSO0352 (118 aa).

The protein belongs to the PDCD5 family.

The chain is DNA-binding protein SSO0352 from Saccharolobus solfataricus (strain ATCC 35092 / DSM 1617 / JCM 11322 / P2) (Sulfolobus solfataricus).